A 744-amino-acid polypeptide reads, in one-letter code: MAVQPGPPQLLQVLLTISLGSIRLIQAGAYYGIKPLPPQIPPQMPPQIPQYQPLGQQVPHMPLAKDGLTMGKEMPHAQYGKEYPHLPQYMKEVQPVPRMGKEAVPKKGKEIPLASLRGEQGPRGEPGPRGPPGPPGLPGQGIPGIKGKPGPQGYPGVGKPGMPGMPGKPGAMGMPGAKGEIGPKGEIGPMGIPGPQGPPGPHGLPGIGKPGGPGLPGQPGAKGDRGPKGPPGPPGLQGPKGEKGFGMPGLPGLKGPPGMHGPPGPVGLPGVGKPGVTGFPGPQGPLGKPGPPGEPGPQGPIGVPGVQGPPGLPGVGKPGQDGIPGQPGFPGGKGEQGLPGLPGPPGLPGVGKPGFPGPKGDRGIGGVPGALGPRGEKGPVGAPGMGGPPGEPGLPGIPGPMGPPGAIGFPGPKGEGGIVGPQGPPGPKGEPGLQGFPGKPGFLGEVGPPGIRGLPGPIGPKGEAGHKGLPGLPGVPGLLGPKGEPGIPGDQGLQGPPGIPGITGPSGPIGPPGIPGPKGEPGLPGPPGFPGVGKPGVAGLHGPPGKPGALGPQGQPGLPGPPGPPGPPGPPAVMPPTPAPQGEYLPDMGLGIDGVKTPHAYAAKKGKNGGPAYEMPAFTAELTAPFPPVGAPIKFDRLLYNGRQNYNPQTGIFTCEVPGVYYFAYHVHCKGGNVWVALFKNNEPVMYTYDEYKKGFLDQASGSAVLLLRPGDRVFLQNPSEQAAGLYAGQYVHSSFSGYLLYPM.

Residues 1–27 form the signal peptide; the sequence is MAVQPGPPQLLQVLLTISLGSIRLIQA. A nonhelical region (NC2) region spans residues 29 to 117; it reads AYYGIKPLPP…GKEIPLASLR (89 aa). Positions 101-110 are enriched in basic and acidic residues; the sequence is KEAVPKKGKE. 2 disordered regions span residues 101 to 434 and 463 to 584; these read KEAV…PGLQ and EAGH…QGEY. Residues 118 to 571 form a triple-helical region region; sequence GEQGPRGEPG…PGPPGPPGPP (454 aa). Pro residues predominate over residues 128 to 137; it reads PRGPPGPPGL. Over residues 168-190 the composition is skewed to low complexity; sequence KPGAMGMPGAKGEIGPKGEIGPM. Residues 203–217 show a composition bias toward gly residues; sequence GLPGIGKPGGPGLPG. A compositionally biased stretch (pro residues) spans 288–298; it reads KPGPPGEPGPQ. Residues 328–337 are compositionally biased toward gly residues; that stretch reads GFPGGKGEQG. Residues 389–403 are compositionally biased toward pro residues; that stretch reads PGEPGLPGIPGPMGP. Positions 411–420 are enriched in gly residues; it reads GPKGEGGIVG. Low complexity-rich tracts occupy residues 469–506 and 540–556; these read LPGL…TGPS and LHGP…QGQP. The span at 558 to 579 shows a compositional bias: pro residues; it reads LPGPPGPPGPPGPPAVMPPTPA. The tract at residues 572–744 is nonhelical region (NC1); the sequence is AVMPPTPAPQ…SFSGYLLYPM (173 aa). A C1q domain is found at 611–744; sequence PAYEMPAFTA…SFSGYLLYPM (134 aa).

In terms of assembly, homotrimers, or heterotrimers in association with alpha 2(VIII) type collagens. Four homotrimers can form a tetrahedron stabilized by central interacting C-terminal NC1 trimers. Prolines at the third position of the tripeptide repeating unit (G-X-Y) are hydroxylated in some or all of the chains.

It is found in the secreted. It localises to the extracellular space. The protein resides in the extracellular matrix. The protein localises to the basement membrane. Macromolecular component of the subendothelium. Major component of the Descemet's membrane (basement membrane) of corneal endothelial cells. Also a component of the endothelia of blood vessels. Necessary for migration and proliferation of vascular smooth muscle cells and thus, has a potential role in the maintenance of vessel wall integrity and structure, in particular in atherogenesis. The sequence is that of Collagen alpha-1(VIII) chain (COL8A1) from Gallus gallus (Chicken).